Here is a 335-residue protein sequence, read N- to C-terminus: Probable peroxidase 26 (335 aa).

The first 18 residues, 1-18 (MVMIHIFLTVMVVGGVSL), serve as a signal peptide directing secretion. Intrachain disulfides connect Cys-46-Cys-122, Cys-79-Cys-84, Cys-128-Cys-331, and Cys-205-Cys-237. The active site involves Arg-73. Ca(2+) contacts are provided by Asp-78, Val-81, Gly-83, Asp-85, and Ser-87. Pro-168 is a substrate binding site. His-198 serves as a coordination point for heme b. Ca(2+) is bound at residue Ser-199. Asn-216 carries an N-linked (GlcNAc...) asparagine glycan. Ca(2+)-binding residues include Asp-255 and Ser-258. 2 N-linked (GlcNAc...) asparagine glycosylation sites follow: Asn-259 and Asn-273.

Belongs to the peroxidase family. Classical plant (class III) peroxidase subfamily. The cofactor is heme b. Requires Ca(2+) as cofactor.

It localises to the secreted. The enzyme catalyses 2 a phenolic donor + H2O2 = 2 a phenolic radical donor + 2 H2O. Its function is as follows. Removal of H(2)O(2), oxidation of toxic reductants, biosynthesis and degradation of lignin, suberization, auxin catabolism, response to environmental stresses such as wounding, pathogen attack and oxidative stress. The enzyme activity has to be proved. The chain is Probable peroxidase 26 (PER26) from Arabidopsis thaliana (Mouse-ear cress).